A 567-amino-acid chain; its full sequence is Dihydroxy-acid dehydratase 2 (567 aa).

[2Fe-2S] cluster is bound at residue C56. D88 contacts Mg(2+). C129 serves as a coordination point for [2Fe-2S] cluster. D130 and K131 together coordinate Mg(2+). Position 131 is an N6-carboxylysine (K131). C206 is a binding site for [2Fe-2S] cluster. E457 is a binding site for Mg(2+). S483 serves as the catalytic Proton acceptor.

It belongs to the IlvD/Edd family. Homodimer. The cofactor is [2Fe-2S] cluster. Mg(2+) serves as cofactor.

The catalysed reaction is (2R)-2,3-dihydroxy-3-methylbutanoate = 3-methyl-2-oxobutanoate + H2O. It carries out the reaction (2R,3R)-2,3-dihydroxy-3-methylpentanoate = (S)-3-methyl-2-oxopentanoate + H2O. It functions in the pathway amino-acid biosynthesis; L-isoleucine biosynthesis; L-isoleucine from 2-oxobutanoate: step 3/4. It participates in amino-acid biosynthesis; L-valine biosynthesis; L-valine from pyruvate: step 3/4. Functionally, functions in the biosynthesis of branched-chain amino acids. Catalyzes the dehydration of (2R,3R)-2,3-dihydroxy-3-methylpentanoate (2,3-dihydroxy-3-methylvalerate) into 2-oxo-3-methylpentanoate (2-oxo-3-methylvalerate) and of (2R)-2,3-dihydroxy-3-methylbutanoate (2,3-dihydroxyisovalerate) into 2-oxo-3-methylbutanoate (2-oxoisovalerate), the penultimate precursor to L-isoleucine and L-valine, respectively. The chain is Dihydroxy-acid dehydratase 2 from Corynebacterium efficiens (strain DSM 44549 / YS-314 / AJ 12310 / JCM 11189 / NBRC 100395).